Here is a 910-residue protein sequence, read N- to C-terminus: Potassium/sodium hyperpolarization-activated cyclic nucleotide-gated channel 1 (910 aa).

The segment at 1–75 (MEGGGKPNSA…PAGSFEDAEG (75 aa)) is disordered. The Cytoplasmic segment spans residues 1–131 (MEGGGKPNSA…WIIHPYSDFR (131 aa)). Residues 132–153 (FYWDLIMLIMMVGNLVIIPVGI) form a helical membrane-spanning segment. Residues 154-162 (TFFTEQTTT) are Extracellular-facing. Residues 163-183 (PWIIFNVASDTVFLLDLIMNF) form a helical membrane-spanning segment. The Cytoplasmic portion of the chain corresponds to 184 to 204 (RTGTVNEDSSEIILDPKVIKM). Residues 205–225 (NYLKSWFVVDFISSIPVDYIF) form a helical membrane-spanning segment. Residues 226–249 (LIVEKGMDSEVYKTARALRIVRFT) are Extracellular-facing. Residues 250-270 (KILSLLRLLRLSRLIRYIHQW) traverse the membrane as a helical; Voltage-sensor segment. Residues 271-284 (EEIFHMTYDLASAV) are Cytoplasmic-facing. A helical membrane pass occupies residues 285-307 (VRIFNLIGMMLLLCHWDGCLQFL). The Extracellular portion of the chain corresponds to 308 to 333 (VPLLQDFPPDCWVSLNEMVNDSWGKQ). Asparagine 327 carries an N-linked (GlcNAc...) asparagine glycan. An intramembrane region (pore-forming) is located at residues 334–355 (YSYALFKAMSHMLCIGYGAQAP). The Selectivity filter motif lies at 347–351 (CIGYG). Over 356 to 360 (VSMSD) the chain is Extracellular. The chain crosses the membrane as a helical span at residues 361 to 381 (LWITMLSMIVGATCYAMFVGH). Over 382 to 910 (ATALIQSLDS…AEKPRFASNL (529 aa)) the chain is Cytoplasmic. Positions 528, 529, 531, 538, 539, 579, and 582 each coordinate 3',5'-cyclic AMP. Disordered regions lie at residues 634 to 681 (TALN…QPSA), 771 to 791 (QQQQQPQTPGSSTPKNEVHKS), and 865 to 910 (QMSS…ASNL). Low complexity predominate over residues 639-680 (TSSTTTPTSRMRTQSPPVYTATSLSHSNLHSPSPSTQTPQPS). Polar residues predominate over residues 780-791 (GSSTPKNEVHKS). Pro residues predominate over residues 875-885 (RGVPPAPPPPA). Residues 900–910 (DAEKPRFASNL) show a composition bias toward basic and acidic residues.

It belongs to the potassium channel HCN family. Homotetramer. Heterotetramer with HCN2. The potassium channel is composed of a homo- or heterotetrameric complex of pore-forming subunits. Interacts with KCNE2. Interacts with the SH3 domain of CSK. Post-translationally, N-glycosylated. Predominantly expressed in brain. Highly expressed in apical dendrites of pyramidal neurons in the cortex, in the layer corresponding to the stratum lacunosum-moleculare in the hippocampus and in axons of basket cells in the cerebellum (at protein level). Expressed in a subset of elongated cells in taste buds.

The protein resides in the cell membrane. The catalysed reaction is Na(+)(in) = Na(+)(out). It carries out the reaction K(+)(in) = K(+)(out). With respect to regulation, activated by cAMP. cAMP binding causes a conformation change that leads to the assembly of an active tetramer and channel opening. Compared to other family members, cAMP has less stimulatory effect on HCN1 because part of the molecules already contain bound cAMP and form homotetramers when cAMP levels are low, this inherent tetramerization in HCN1 results in a weaker response to increased cAMP. In terms of biological role, hyperpolarization-activated ion channel that are permeable to sodium and potassium ions. Exhibits weak selectivity for potassium over sodium ions. Contributes to the native pacemaker currents in heart (If) and in neurons (Ih). Participates in cerebellar mechanisms of motor learning. May mediate responses to sour stimuli. The protein is Potassium/sodium hyperpolarization-activated cyclic nucleotide-gated channel 1 (Hcn1) of Mus musculus (Mouse).